The sequence spans 428 residues: Enolase (428 aa).

Residue glutamine 163 coordinates (2R)-2-phosphoglycerate. Glutamate 205 serves as the catalytic Proton donor. Residues aspartate 242, glutamate 283, and aspartate 310 each coordinate Mg(2+). Residues lysine 335, arginine 364, serine 365, and lysine 386 each contribute to the (2R)-2-phosphoglycerate site. Lysine 335 functions as the Proton acceptor in the catalytic mechanism.

The protein belongs to the enolase family. Mg(2+) is required as a cofactor.

It is found in the cytoplasm. The protein localises to the secreted. Its subcellular location is the cell surface. It catalyses the reaction (2R)-2-phosphoglycerate = phosphoenolpyruvate + H2O. It participates in carbohydrate degradation; glycolysis; pyruvate from D-glyceraldehyde 3-phosphate: step 4/5. Catalyzes the reversible conversion of 2-phosphoglycerate (2-PG) into phosphoenolpyruvate (PEP). It is essential for the degradation of carbohydrates via glycolysis. In Sulfurihydrogenibium sp. (strain YO3AOP1), this protein is Enolase.